The following is an 81-amino-acid chain: Cortexin-2 (81 aa).

Residues 29 to 49 (TGFAFVGILCIFLGLLIIRCF) form a helical membrane-spanning segment.

The protein belongs to the cortexin family.

Its subcellular location is the membrane. In Mus musculus (Mouse), this protein is Cortexin-2 (Ctxn2).